The chain runs to 1749 residues: E3 ubiquitin-protein ligase UBR1 (1749 aa).

N-acetylalanine is present on A2. The residue at position 21 (T21) is a Phosphothreonine. A UBR-type zinc finger spans residues 97–168 (QLCGRVFKSG…TGPFCVNHEP (72 aa)). Zn(2+) is bound by residues C99, C112, C115, C124, C127, H133, and H136. Residue F148 coordinates a peptide. C149 provides a ligand contact to Zn(2+). A peptide is bound at residue D150. C151 is a binding site for Zn(2+). Residue D153 participates in a peptide binding. Zn(2+) is bound by residues C163 and H166. Residues 842–868 (QHSKAEHMQKKRRKQENKDEALPPPPP) form a disordered region. Residues 1019-1054 (RKRKAEAARLHRQKIMAQMSALQKNFIETHKLMYDN) are UBC2-binding region (U2BR). Residues C1098, C1101, C1159, H1161, H1164, and C1167 each contribute to the Zn(2+) site. The segment at 1098-1201 (CILCQEEQEV…SGEYLCPLCK (104 aa)) adopts an RING-type; atypical zinc-finger fold. S1179 is modified (phosphoserine). Zn(2+) contacts are provided by C1197, C1200, C1627, C1630, and C1653.

This sequence belongs to the E3 ubiquitin-protein ligase UBR1-like family. Interacts with RECQL4. As to expression, broadly expressed, with highest levels in skeletal muscle, kidney and pancreas. Present in acinar cells of the pancreas (at protein level).

The protein resides in the cytoplasm. Its subcellular location is the cytosol. It catalyses the reaction S-ubiquitinyl-[E2 ubiquitin-conjugating enzyme]-L-cysteine + [acceptor protein]-L-lysine = [E2 ubiquitin-conjugating enzyme]-L-cysteine + N(6)-ubiquitinyl-[acceptor protein]-L-lysine.. The protein operates within protein modification; protein ubiquitination. Its activity is regulated as follows. Inhibited by the small-molecule compound RF-C11, which bears two heterovalent ligands: RF-C11 inhibits activity toward both type-1 and type-2 N-degrons. In terms of biological role, E3 ubiquitin-protein ligase which is a component of the N-end rule pathway. Recognizes and binds proteins bearing specific N-terminal residues that are destabilizing according to the N-end rule, leading to their ubiquitination and subsequent degradation. Recognizes both type-1 and type-2 N-degrons, containing positively charged amino acids (Arg, Lys and His) and bulky and hydrophobic amino acids, respectively. Does not ubiquitinate proteins that are acetylated at the N-terminus. In contrast, it strongly binds methylated N-degrons. Binds leucine and is a negative regulator of the leucine-mTOR signaling pathway, thereby controlling cell growth. The polypeptide is E3 ubiquitin-protein ligase UBR1 (Homo sapiens (Human)).